A 290-amino-acid polypeptide reads, in one-letter code: Cell division protein ZipA (290 aa).

A topological domain (periplasmic) is located at residue Met-1. A helical transmembrane segment spans residues 2 to 22 (DIGLREWLIVIGLIVIAGILF). The Cytoplasmic portion of the chain corresponds to 23–290 (DGWRRMRGGK…HERRSLMQKR (268 aa)). The disordered stretch occupies residues 66–143 (REPSFDEQDL…REKAPSVAAA (78 aa)). Residues 81-99 (REGKERKGGKRQDEPRQGD) show a composition bias toward basic and acidic residues. Residues 100–114 (LDLDEGMALEADPSD) are compositionally biased toward acidic residues.

This sequence belongs to the ZipA family. Interacts with FtsZ via their C-terminal domains.

The protein localises to the cell inner membrane. Functionally, essential cell division protein that stabilizes the FtsZ protofilaments by cross-linking them and that serves as a cytoplasmic membrane anchor for the Z ring. Also required for the recruitment to the septal ring of downstream cell division proteins. The sequence is that of Cell division protein ZipA from Pseudomonas paraeruginosa (strain DSM 24068 / PA7) (Pseudomonas aeruginosa (strain PA7)).